A 642-amino-acid chain; its full sequence is Threonine--tRNA ligase (642 aa).

The region spanning 1–61 (MPVITLPDGS…DTDAQLAIIT (61 aa)) is the TGS domain. Residues 243–534 (DHRKIGKQLD…LTEEFAGFFP (292 aa)) form a catalytic region. 3 residues coordinate Zn(2+): Cys334, His385, and His511.

This sequence belongs to the class-II aminoacyl-tRNA synthetase family. In terms of assembly, homodimer. The cofactor is Zn(2+).

The protein localises to the cytoplasm. The catalysed reaction is tRNA(Thr) + L-threonine + ATP = L-threonyl-tRNA(Thr) + AMP + diphosphate + H(+). In terms of biological role, catalyzes the attachment of threonine to tRNA(Thr) in a two-step reaction: L-threonine is first activated by ATP to form Thr-AMP and then transferred to the acceptor end of tRNA(Thr). Also edits incorrectly charged L-seryl-tRNA(Thr). The chain is Threonine--tRNA ligase from Pectobacterium carotovorum subsp. carotovorum (strain PC1).